A 103-amino-acid polypeptide reads, in one-letter code: Large ribosomal subunit protein eL30 (103 aa).

It belongs to the eukaryotic ribosomal protein eL30 family.

The chain is Large ribosomal subunit protein eL30 from Methanothrix thermoacetophila (strain DSM 6194 / JCM 14653 / NBRC 101360 / PT) (Methanosaeta thermophila).